We begin with the raw amino-acid sequence, 134 residues long: MNALAQKTPSPPTLVFTEAAARKVKGLIDEENNPYLNLRVFITGGGCSGFQYGFTFDEAINSDDLVIEKQLEEEDDDEGGTGQMALVKLLVDPLSLQYLQGAEIDYHEDVSGAQFVIRNPNAKTTCGCGSSFAA.

Iron-sulfur cluster is bound by residues cysteine 47, cysteine 126, and cysteine 128.

This sequence belongs to the HesB/IscA family. As to quaternary structure, homodimer. The cofactor is iron-sulfur cluster.

Required for insertion of 4Fe-4S clusters for at least IspG. In Coxiella burnetii (strain Dugway 5J108-111), this protein is Iron-sulfur cluster insertion protein ErpA.